A 286-amino-acid polypeptide reads, in one-letter code: ATP synthase gamma chain (286 aa).

The protein belongs to the ATPase gamma chain family. In terms of assembly, F-type ATPases have 2 components, CF(1) - the catalytic core - and CF(0) - the membrane proton channel. CF(1) has five subunits: alpha(3), beta(3), gamma(1), delta(1), epsilon(1). CF(0) has three main subunits: a, b and c.

The protein localises to the cell inner membrane. Produces ATP from ADP in the presence of a proton gradient across the membrane. The gamma chain is believed to be important in regulating ATPase activity and the flow of protons through the CF(0) complex. The protein is ATP synthase gamma chain of Pseudomonas fluorescens (strain Pf0-1).